Reading from the N-terminus, the 277-residue chain is Proteasome subunit beta type-7 (277 aa).

Residues 1–43 constitute a propeptide, removed in mature form; sequence MAAVSVFQPPVGGFSFDNCRRNAVLEADFAKKGFKLPKARKTG. The Nucleophile role is filled by threonine 44.

Belongs to the peptidase T1B family. In terms of assembly, the 26S proteasome consists of a 20S proteasome core and two 19S regulatory subunits. The 20S proteasome core is a barrel-shaped complex made of 28 subunits that are arranged in four stacked rings. The two outer rings are each formed by seven alpha subunits, and the two inner rings are formed by seven beta subunits. The proteolytic activity is exerted by three beta-subunits PSMB5, PSMB6 and PSMB7.

The protein resides in the cytoplasm. The protein localises to the nucleus. The enzyme catalyses Cleavage of peptide bonds with very broad specificity.. Functionally, component of the 20S core proteasome complex involved in the proteolytic degradation of most intracellular proteins. This complex plays numerous essential roles within the cell by associating with different regulatory particles. Associated with two 19S regulatory particles, forms the 26S proteasome and thus participates in the ATP-dependent degradation of ubiquitinated proteins. The 26S proteasome plays a key role in the maintenance of protein homeostasis by removing misfolded or damaged proteins that could impair cellular functions, and by removing proteins whose functions are no longer required. Associated with the PA200 or PA28, the 20S proteasome mediates ubiquitin-independent protein degradation. This type of proteolysis is required in several pathways including spermatogenesis (20S-PA200 complex) or generation of a subset of MHC class I-presented antigenic peptides (20S-PA28 complex). Within the 20S core complex, PSMB7 displays a trypsin-like activity. This is Proteasome subunit beta type-7 (Psmb7) from Mus musculus (Mouse).